Reading from the N-terminus, the 81-residue chain is Defensin-like protein 115 (81 aa).

The first 24 residues, methionine 1–cysteine 24, serve as a signal peptide directing secretion. Disulfide bonds link cysteine 40-cysteine 78, cysteine 46-cysteine 69, cysteine 54-cysteine 76, and cysteine 58-cysteine 77.

It belongs to the DEFL family.

The protein resides in the secreted. The protein is Defensin-like protein 115 of Arabidopsis thaliana (Mouse-ear cress).